Reading from the N-terminus, the 213-residue chain is Adenylate kinase (213 aa).

ATP is bound at residue 10-15; the sequence is GAGKGT. Positions 30 to 59 are NMP; the sequence is AVGDIFRTIIKTSTSEAELINNYVKQGALI. Residues arginine 36, 57–59, 85–88, and glutamine 92 contribute to the AMP site; these read ALI and GYPR. The segment at 123-161 is LID; that stretch reads GRYSCKNCGKIYNIHFLQPKIEHVCDVCSSSVFDYRKDD. Arginine 124 is an ATP binding site. Cysteine 127 and cysteine 130 together coordinate Zn(2+). 133–134 serves as a coordination point for ATP; sequence IY. Zn(2+) is bound by residues cysteine 147 and cysteine 150. AMP is bound by residues arginine 158 and arginine 169. Residue lysine 197 participates in ATP binding.

Belongs to the adenylate kinase family. Monomer.

Its subcellular location is the cytoplasm. It carries out the reaction AMP + ATP = 2 ADP. It participates in purine metabolism; AMP biosynthesis via salvage pathway; AMP from ADP: step 1/1. Functionally, catalyzes the reversible transfer of the terminal phosphate group between ATP and AMP. Plays an important role in cellular energy homeostasis and in adenine nucleotide metabolism. The sequence is that of Adenylate kinase from Rickettsia prowazekii (strain Madrid E).